We begin with the raw amino-acid sequence, 171 residues long: Ribosome maturation factor RimP (171 aa).

The protein belongs to the RimP family.

Its subcellular location is the cytoplasm. Functionally, required for maturation of 30S ribosomal subunits. The sequence is that of Ribosome maturation factor RimP from Anaeromyxobacter dehalogenans (strain 2CP-C).